Here is a 26-residue protein sequence, read N- to C-terminus: Mitochondrial import receptor subunit TOM7-2 (26 aa).

The protein belongs to the Tom7 family. Forms part of the preprotein translocase complex of the outer mitochondrial membrane (TOM complex).

It is found in the mitochondrion outer membrane. Functionally, seems to act as a modulator of the dynamics of the mitochondrial protein transport machinery. Seems to promote the dissociation of subunits of the outer membrane translocase. The protein is Mitochondrial import receptor subunit TOM7-2 (TOM7-2) of Solanum tuberosum (Potato).